Here is a 548-residue protein sequence, read N- to C-terminus: Probable aquaglyceroporin-4 (548 aa).

Polar residues predominate over residues 1–22 (MAGTQDQSQDYFSKPTTPSTPG). Disordered regions lie at residues 1–63 (MAGT…LPST), 76–101 (SRGF…SHFH), and 158–270 (KEET…ESGD). Residues 1-290 (MAGTQDQSQD…ARLRARHPEP (290 aa)) are Cytoplasmic-facing. Residues 38–48 (PDRESGTERAK) show a composition bias toward basic and acidic residues. Polar residues-rich tracts occupy residues 77-97 (RGFS…PQHS) and 171-200 (SRTT…SRTT). Residues 249–265 (PDFKVDGEPLGHQEKPC) show a composition bias toward basic and acidic residues. Residues 291-311 (LAEFLATAVAIFLGLTGTLSV) traverse the membrane as a helical segment. Asn-312 is a glycosylation site (N-linked (GlcNAc...) asparagine). Topologically, residues 312–327 (NLSATQSQPYGTYETS) are extracellular. The helical transmembrane segment at 328–348 (CWAWGFAWMFGIYLGGGVSGA) threads the bilayer. Topologically, residues 349-369 (HMNPAISVSLSIFRGFPWRQC) are cytoplasmic. An NPA 1 motif is present at residues 351-353 (NPA). The helical transmembrane segment at 370 to 390 (VIYVFVQFIASIVAGALAYAM) threads the bilayer. At 391–420 (YADSINHVDPDMTKMSMTFFSTPREWVTLK) the chain is on the extracellular side. A helical transmembrane segment spans residues 421 to 441 (SAFFNQVVGSAIMMIAVFALG). The Cytoplasmic segment spans residues 442–448 (DDQNNPP). A helical membrane pass occupies residues 449-469 (GAGMHALVLGFLVTTLKFTLG). The Extracellular segment spans residues 470 to 508 (YNIGSALNPASDFGPRVIAYAVGFRGDNVFHSGWWFYGP). Positions 477–479 (NPA) match the NPA 2 motif. The helical transmembrane segment at 509–529 (WAATLIGSLLGCTLYDGFVFV) threads the bilayer. At 530-548 (GSESPVNFRVDKRVKKLFN) the chain is on the cytoplasmic side.

The protein belongs to the MIP/aquaporin (TC 1.A.8) family.

The protein localises to the membrane. It carries out the reaction H2O(in) = H2O(out). It catalyses the reaction glycerol(in) = glycerol(out). Its function is as follows. Probable water/glycerol channel that may have redundant functions with FgAQP2. The polypeptide is Probable aquaglyceroporin-4 (Gibberella zeae (strain ATCC MYA-4620 / CBS 123657 / FGSC 9075 / NRRL 31084 / PH-1) (Wheat head blight fungus)).